A 179-amino-acid chain; its full sequence is Large ribosomal subunit protein uL6 (179 aa).

Belongs to the universal ribosomal protein uL6 family. Part of the 50S ribosomal subunit.

Its function is as follows. This protein binds to the 23S rRNA, and is important in its secondary structure. It is located near the subunit interface in the base of the L7/L12 stalk, and near the tRNA binding site of the peptidyltransferase center. In Syntrophobacter fumaroxidans (strain DSM 10017 / MPOB), this protein is Large ribosomal subunit protein uL6.